The sequence spans 147 residues: MHLTADQVAALKASWPEVSAGDGGAQLGLEMFTRYFDENPQMMFVFGYSGRTSALKHNSKLQNHGKIIVHQIGQAVSELDDGSKFEATLHKLGQEHKGFGDIKGEYFPALGDALLEAMNSKVHGLDRTLWAAGYRVISDALIAGLES.

In terms of domain architecture, Globin spans 2–146; sequence HLTADQVAAL…ISDALIAGLE (145 aa). Histidine 96 contributes to the heme b binding site.

Belongs to the globin family. As to quaternary structure, polymer.

The chain is Globin, polymeric component P3 from Glycera dibranchiata (Bloodworm).